A 334-amino-acid polypeptide reads, in one-letter code: Aromatic O-demethylase, reductase subunit (334 aa).

Residues 1–91 (MTFAVSVGGR…DTEVRSTADA (91 aa)) form the 2Fe-2S ferredoxin-type domain. [2Fe-2S] cluster contacts are provided by cysteine 35, cysteine 40, cysteine 43, and cysteine 75. An FAD-binding FR-type domain is found at 98-198 (LRDLTATVLE…TGPLGDFHLP (101 aa)). FAD-binding positions include 145–148 (RQYS), 162–164 (HVR), 170–172 (VAT), threonine 215, phenylalanine 330, and serine 334.

Monomer. Forms a heterodimer with GcoA. It depends on FAD as a cofactor. [2Fe-2S] cluster is required as a cofactor.

The catalysed reaction is 2 oxidized [cytochrome P450] + NADH = 2 reduced [cytochrome P450] + NAD(+) + H(+). It participates in aromatic compound metabolism. Its function is as follows. Part of a two-component P450 system that efficiently O-demethylates diverse aromatic substrates such as guaiacol and a wide variety of lignin-derived monomers. Is likely involved in lignin degradation, allowing Amycolatopsis sp. ATCC 39116 to catabolize plant biomass. GcoB transfers electrons from NADH to the cytochrome P450 subunit GcoA. Highly prefers NADH over NADPH as the electron donor. In Amycolatopsis sp. (strain ATCC 39116 / 75iv2), this protein is Aromatic O-demethylase, reductase subunit.